The sequence spans 357 residues: Phospho-N-acetylmuramoyl-pentapeptide-transferase (357 aa).

10 helical membrane passes run 23–43 (AIFS…YFIY), 70–90 (TMGG…YCNL), 91–111 (SNIY…IGFI), 127–147 (LKWK…MIKI), 171–191 (YLYI…VNLT), 196–216 (GLAI…SLFS), 236–256 (LAIL…FNSY), 260–280 (VFMG…IAIL), 286–306 (LLII…LQII), and 334–354 (LIIV…LISL).

It belongs to the glycosyltransferase 4 family. MraY subfamily. The cofactor is Mg(2+).

Its subcellular location is the cell inner membrane. The catalysed reaction is UDP-N-acetyl-alpha-D-muramoyl-L-alanyl-gamma-D-glutamyl-meso-2,6-diaminopimeloyl-D-alanyl-D-alanine + di-trans,octa-cis-undecaprenyl phosphate = di-trans,octa-cis-undecaprenyl diphospho-N-acetyl-alpha-D-muramoyl-L-alanyl-D-glutamyl-meso-2,6-diaminopimeloyl-D-alanyl-D-alanine + UMP. It participates in cell wall biogenesis; peptidoglycan biosynthesis. Functionally, catalyzes the initial step of the lipid cycle reactions in the biosynthesis of the cell wall peptidoglycan: transfers peptidoglycan precursor phospho-MurNAc-pentapeptide from UDP-MurNAc-pentapeptide onto the lipid carrier undecaprenyl phosphate, yielding undecaprenyl-pyrophosphoryl-MurNAc-pentapeptide, known as lipid I. The sequence is that of Phospho-N-acetylmuramoyl-pentapeptide-transferase from Buchnera aphidicola subsp. Acyrthosiphon pisum (strain APS) (Acyrthosiphon pisum symbiotic bacterium).